Reading from the N-terminus, the 548-residue chain is MGAKDVKFGNEARIKMLRGVNVLADAVKVTLGPKGRNVVLDKSFGAPSITKDGVSVAREIELEDKFENMGAQMVKEVASKANDAAGDGTTTATLLAQSIVNEGLKAVAAGMNPMDLKRGIDKAVISAVEELKNLSVPCSDSKAITQVGTISANADEKVGALIAEAMEKVGNDGVITVEEGTGLQNELEVVKGMQFDRGYLSPYFINKPETGIVELENPYILMADKKISNVREMLPILESVAKSGKPLLIISEDLEGEALATLVVNSMRGIVKVAAVKAPGFGDRRKAMLQDISILTGGSVISEELAMDLEKSTLEDLGQAKRVVINKDTTTIIGGSGEKQAIQSRIGQIRQEIQEATSDYDKEKLNERLAKLSGGVAVLKVGAATEVEMKEKKARVEDALHATRAAVEEGVVAGGGVALVRVAGKISNLRGHNEDQNVGIRVALRAMEAPLRQIVSNSGEEPSVVTNNVKDGKGNYGYNAATDEYGDMIDFGILDPTKVTRSALQYAASVAGLMITTECMVTDLPREDKSSDVASSPAGGMGGMGGMM.

Residues 30–33 (TLGP), Lys51, 87–91 (DGTTT), Gly415, 479–481 (NAA), and Asp495 contribute to the ATP site. The disordered stretch occupies residues 526 to 548 (REDKSSDVASSPAGGMGGMGGMM). The segment covering 539–548 (GGMGGMGGMM) has biased composition (gly residues).

It belongs to the chaperonin (HSP60) family. As to quaternary structure, forms a cylinder of 14 subunits composed of two heptameric rings stacked back-to-back. Interacts with the co-chaperonin GroES.

The protein resides in the cytoplasm. The enzyme catalyses ATP + H2O + a folded polypeptide = ADP + phosphate + an unfolded polypeptide.. In terms of biological role, together with its co-chaperonin GroES, plays an essential role in assisting protein folding. The GroEL-GroES system forms a nano-cage that allows encapsulation of the non-native substrate proteins and provides a physical environment optimized to promote and accelerate protein folding. The chain is Chaperonin GroEL from Buchnera aphidicola subsp. Schizaphis graminum (strain Sg).